Consider the following 219-residue polypeptide: tRNA (guanine-N(7)-)-methyltransferase (219 aa).

The S-adenosyl-L-methionine site is built by aspartate 47, glutamate 72, asparagine 99, and aspartate 125. Aspartate 125 is an active-site residue. Residues lysine 129 and aspartate 161 each contribute to the substrate site.

This sequence belongs to the class I-like SAM-binding methyltransferase superfamily. TrmB family.

The catalysed reaction is guanosine(46) in tRNA + S-adenosyl-L-methionine = N(7)-methylguanosine(46) in tRNA + S-adenosyl-L-homocysteine. Its pathway is tRNA modification; N(7)-methylguanine-tRNA biosynthesis. Functionally, catalyzes the formation of N(7)-methylguanine at position 46 (m7G46) in tRNA. The polypeptide is tRNA (guanine-N(7)-)-methyltransferase (Nostoc sp. (strain PCC 7120 / SAG 25.82 / UTEX 2576)).